A 530-amino-acid polypeptide reads, in one-letter code: Chaperone Ric-8A (530 aa).

Ser435 is subject to Phosphoserine. Phosphothreonine is present on residues Thr440 and Thr442. Residues Ser501, Ser522, Ser523, and Ser527 each carry the phosphoserine modification.

This sequence belongs to the synembryn family. As to quaternary structure, interacts with GDP-bound G alpha proteins GNAI1, GNAO1 and GNAQ, and with GNA13 with lower affinity. Does not interact with G-alpha proteins when they are in complex with subunits beta and gamma. Interacts (via C-terminus) with RGS14; the interaction stimulates the dissociation of the complex between RGS14 and the active GTP-bound form of GNAI1. Interacts with NCS1; interaction is favored in the absence of Ca(2+) and myristoylation of NCS1 is not required. In terms of tissue distribution, expressed in neurons and neurites of the CA1 and CA2 subregions of the hippocampus (at protein level). In adult brain, it is expressed in the neocortex, hippocampus and cerebellum as well as in the pineal gland and ependymal layer.

The protein resides in the cytoplasm. It localises to the cell cortex. Its function is as follows. Chaperone that specifically binds and folds nascent G alpha proteins prior to G protein heterotrimer formation, promoting their stability and activity: folds GNAI1, GNAO1, GNA13 and GNAQ. Does not fold G(s) G-alpha proteins GNAS nor GNAL. Also acts as a guanine nucleotide exchange factor (GEF) for G alpha proteins by stimulating exchange of bound GDP for free GTP. Involved in regulation of microtubule pulling forces during mitotic movement of chromosomes by stimulating G(i)-alpha protein (GNAI1), possibly leading to release G(i)-alpha-GTP and NuMA proteins from the NuMA-GPSM2-G(i)-alpha-GDP complex. Also acts as an activator for G(q)-alpha (GNAQ) protein by enhancing the G(q)-coupled receptor-mediated ERK activation. In Mus musculus (Mouse), this protein is Chaperone Ric-8A.